The sequence spans 197 residues: Imidazoleglycerol-phosphate dehydratase (197 aa).

This sequence belongs to the imidazoleglycerol-phosphate dehydratase family.

The protein localises to the cytoplasm. It catalyses the reaction D-erythro-1-(imidazol-4-yl)glycerol 3-phosphate = 3-(imidazol-4-yl)-2-oxopropyl phosphate + H2O. It participates in amino-acid biosynthesis; L-histidine biosynthesis; L-histidine from 5-phospho-alpha-D-ribose 1-diphosphate: step 6/9. This is Imidazoleglycerol-phosphate dehydratase from Gloeobacter violaceus (strain ATCC 29082 / PCC 7421).